Here is an 87-residue protein sequence, read N- to C-terminus: Small ribosomal subunit protein bS20 (87 aa).

It belongs to the bacterial ribosomal protein bS20 family.

Its function is as follows. Binds directly to 16S ribosomal RNA. This Geobacter sulfurreducens (strain ATCC 51573 / DSM 12127 / PCA) protein is Small ribosomal subunit protein bS20.